A 338-amino-acid polypeptide reads, in one-letter code: Adenylosuccinate synthetase (338 aa).

GTP-binding positions include 12 to 18 and 42 to 44; these read GDEGKGK and GHT. Aspartate 13 serves as the catalytic Proton acceptor. Aspartate 13 and glycine 42 together coordinate Mg(2+). Residues 13–16, 40–43, threonine 127, arginine 141, glutamine 179, threonine 194, and arginine 256 each bind IMP; these read DEGK and NAGH. The active-site Proton donor is histidine 43. 252-258 provides a ligand contact to substrate; sequence TVTGRRR. GTP contacts are provided by residues arginine 258, 284 to 286, and 324 to 326; these read CLD and STG.

The protein belongs to the adenylosuccinate synthetase family. In terms of assembly, homodimer. The cofactor is Mg(2+).

It localises to the cytoplasm. The catalysed reaction is IMP + L-aspartate + GTP = N(6)-(1,2-dicarboxyethyl)-AMP + GDP + phosphate + 2 H(+). Its pathway is purine metabolism; AMP biosynthesis via de novo pathway; AMP from IMP: step 1/2. Plays an important role in the de novo pathway of purine nucleotide biosynthesis. Catalyzes the first committed step in the biosynthesis of AMP from IMP. This is Adenylosuccinate synthetase from Methanococcus maripaludis (strain DSM 14266 / JCM 13030 / NBRC 101832 / S2 / LL).